Reading from the N-terminus, the 605-residue chain is Elongation factor 4 (605 aa).

The 183-residue stretch at 11-193 folds into the tr-type G domain; it reads KRIRNFSIIA…RIVTQISPPK (183 aa). GTP is bound by residues 23–28 and 140–143; these read DHGKST and NKVD.

Belongs to the TRAFAC class translation factor GTPase superfamily. Classic translation factor GTPase family. LepA subfamily.

The protein resides in the cell membrane. The enzyme catalyses GTP + H2O = GDP + phosphate + H(+). Its function is as follows. Required for accurate and efficient protein synthesis under certain stress conditions. May act as a fidelity factor of the translation reaction, by catalyzing a one-codon backward translocation of tRNAs on improperly translocated ribosomes. Back-translocation proceeds from a post-translocation (POST) complex to a pre-translocation (PRE) complex, thus giving elongation factor G a second chance to translocate the tRNAs correctly. Binds to ribosomes in a GTP-dependent manner. The polypeptide is Elongation factor 4 (Phytoplasma australiense).